The sequence spans 60 residues: Large ribosomal subunit protein bL32 (60 aa).

Residues 1–60 (MAVQQNKKSPSKRGMHRSHDFLVNPATAIEPNTGETHLRHHISPNGFYRGRKVLKTKADE) are disordered. Positions 49 to 60 (RGRKVLKTKADE) are enriched in basic residues.

This sequence belongs to the bacterial ribosomal protein bL32 family.

In Bordetella bronchiseptica (strain ATCC BAA-588 / NCTC 13252 / RB50) (Alcaligenes bronchisepticus), this protein is Large ribosomal subunit protein bL32.